A 436-amino-acid chain; its full sequence is MTASLVVLPSLWLILIIFTAPYTHCTQSGIYIDNGKDQTVMERVLTDDDKLDVSHEILEFLGIAARPLHHKSHGLSLRKSAPKFLLDVYYRITAEEGLAIKNKSDHSRSKRDANESEQNFITDLDKRAIDESDIIMTFLNKRNHNVEEMRHEHGRRLWFDVNNIPTDNYLMMAELRIYQNSNEGKWTTTNKQFTVTVYMLRSGGSAPNMLEPLSSVNTTGDYVGWLELNVTEALHDWRVNSNENHGIYIGAHALNKPEREIKLDDIGLIHRRTKVDDENQPFMIGFFRGPELIKSTSGHSTQKRTKRSTLHQRKKSKSEPVNPFIENSIENTRSCQMQTLYIDFKDLGWHDWIIAPEGYGAFYCSGECNFPLNAHMNATNHAIVQTLVHLLEPKRVPKPCCAPTRLGALPVLYHLNDENVNLKKYRNMIVKSCGCH.

Residues 1-27 (MTASLVVLPSLWLILIIFTAPYTHCTQ) form the signal peptide. The propeptide occupies 28 to 317 (SGIYIDNGKD…STLHQRKKSK (290 aa)). N-linked (GlcNAc...) asparagine glycosylation is found at asparagine 102, asparagine 114, asparagine 217, and asparagine 229. Residues 293–322 (IKSTSGHSTQKRTKRSTLHQRKKSKSEPVN) form a disordered region. The span at 301 to 316 (TQKRTKRSTLHQRKKS) shows a compositional bias: basic residues. 3 cysteine pairs are disulfide-bonded: cysteine 335–cysteine 401, cysteine 364–cysteine 433, and cysteine 368–cysteine 435. Asparagine 377 carries N-linked (GlcNAc...) asparagine glycosylation.

This sequence belongs to the TGF-beta family. As to quaternary structure, homodimer; disulfide-linked.

It localises to the secreted. The polypeptide is Protein 60A (gbb) (Drosophila virilis (Fruit fly)).